We begin with the raw amino-acid sequence, 99 residues long: Ubiquitin-related modifier 1 homolog (99 aa).

G99 carries the post-translational modification 1-thioglycine. G99 is covalently cross-linked (Glycyl lysine isopeptide (Gly-Lys) (interchain with K-? in acceptor proteins)).

The protein belongs to the URM1 family. As to quaternary structure, interacts with cer. Post-translationally, C-terminal thiocarboxylation occurs in 2 steps, it is first acyl-adenylated (-COAMP) via the hesA/moeB/thiF part of the MOCS3 homolog, then thiocarboxylated (-COSH) via the rhodanese domain of the MOCS3 homolog.

It is found in the cytoplasm. Its pathway is tRNA modification; 5-methoxycarbonylmethyl-2-thiouridine-tRNA biosynthesis. Acts as a sulfur carrier required for 2-thiolation of mcm(5)S(2)U at tRNA wobble positions of cytosolic tRNA(Lys), tRNA(Glu) and tRNA(Gln). Serves as sulfur donor in tRNA 2-thiolation reaction by being thiocarboxylated (-COSH) at its C-terminus by MOCS3. The sulfur is then transferred to tRNA to form 2-thiolation of mcm(5)S(2)U. Also acts as a ubiquitin-like protein (UBL) that is covalently conjugated via an isopeptide bond to lysine residues of target proteins such as Prx2/Jafrac1, Ciao1, Eip71CD and GILT1. The thiocarboxylated form serves as substrate for conjugation and oxidative stress specifically induces the formation of UBL-protein conjugates. The protein is Ubiquitin-related modifier 1 homolog of Drosophila virilis (Fruit fly).